Here is a 165-residue protein sequence, read N- to C-terminus: 2-C-methyl-D-erythritol 2,4-cyclodiphosphate synthase (165 aa).

A divalent metal cation is bound by residues Asp13 and His15. Residues 13 to 15 and 39 to 40 contribute to the 4-CDP-2-C-methyl-D-erythritol 2-phosphate site; these read DRH and HS. A divalent metal cation is bound at residue His47. Residues 61-63 and Phe141 contribute to the 4-CDP-2-C-methyl-D-erythritol 2-phosphate site; that span reads DIG.

It belongs to the IspF family. In terms of assembly, homotrimer. A divalent metal cation is required as a cofactor.

It carries out the reaction 4-CDP-2-C-methyl-D-erythritol 2-phosphate = 2-C-methyl-D-erythritol 2,4-cyclic diphosphate + CMP. It functions in the pathway isoprenoid biosynthesis; isopentenyl diphosphate biosynthesis via DXP pathway; isopentenyl diphosphate from 1-deoxy-D-xylulose 5-phosphate: step 4/6. Its function is as follows. Involved in the biosynthesis of isopentenyl diphosphate (IPP) and dimethylallyl diphosphate (DMAPP), two major building blocks of isoprenoid compounds. Catalyzes the conversion of 4-diphosphocytidyl-2-C-methyl-D-erythritol 2-phosphate (CDP-ME2P) to 2-C-methyl-D-erythritol 2,4-cyclodiphosphate (ME-CPP) with a corresponding release of cytidine 5-monophosphate (CMP). This Thermotoga maritima (strain ATCC 43589 / DSM 3109 / JCM 10099 / NBRC 100826 / MSB8) protein is 2-C-methyl-D-erythritol 2,4-cyclodiphosphate synthase.